The primary structure comprises 204 residues: uncharacterized protein (204 aa).

The tract at residues 118–169 is disordered; that stretch reads FPAASERPMPSRRLSKATQNVQTRPSERPAPCHRRPGPRGPGGRDPPEACHP.

This is an uncharacterized protein from Encephalitozoon cuniculi (strain GB-M1) (Microsporidian parasite).